The sequence spans 304 residues: tRNA dimethylallyltransferase (304 aa).

10–17 (GPTASGKS) contacts ATP. Residue 12-17 (TASGKS) coordinates substrate. Residues 35-38 (DSRQ) form an interaction with substrate tRNA region.

This sequence belongs to the IPP transferase family. As to quaternary structure, monomer. Mg(2+) is required as a cofactor.

The enzyme catalyses adenosine(37) in tRNA + dimethylallyl diphosphate = N(6)-dimethylallyladenosine(37) in tRNA + diphosphate. Catalyzes the transfer of a dimethylallyl group onto the adenine at position 37 in tRNAs that read codons beginning with uridine, leading to the formation of N6-(dimethylallyl)adenosine (i(6)A). This chain is tRNA dimethylallyltransferase, found in Gloeothece citriformis (strain PCC 7424) (Cyanothece sp. (strain PCC 7424)).